Consider the following 219-residue polypeptide: Large ribosomal subunit protein uL3 (219 aa).

The protein belongs to the universal ribosomal protein uL3 family. In terms of assembly, part of the 50S ribosomal subunit. Forms a cluster with proteins L14 and L19.

Its function is as follows. One of the primary rRNA binding proteins, it binds directly near the 3'-end of the 23S rRNA, where it nucleates assembly of the 50S subunit. The protein is Large ribosomal subunit protein uL3 of Corynebacterium kroppenstedtii (strain DSM 44385 / JCM 11950 / CIP 105744 / CCUG 35717).